The chain runs to 365 residues: tRNA/tmRNA (uracil-C(5))-methyltransferase (365 aa).

S-adenosyl-L-methionine contacts are provided by Q189, Y217, N222, E238, and D298. The active-site Nucleophile is C323. The active-site Proton acceptor is E357.

It belongs to the class I-like SAM-binding methyltransferase superfamily. RNA M5U methyltransferase family. TrmA subfamily.

The enzyme catalyses uridine(54) in tRNA + S-adenosyl-L-methionine = 5-methyluridine(54) in tRNA + S-adenosyl-L-homocysteine + H(+). The catalysed reaction is uridine(341) in tmRNA + S-adenosyl-L-methionine = 5-methyluridine(341) in tmRNA + S-adenosyl-L-homocysteine + H(+). Functionally, dual-specificity methyltransferase that catalyzes the formation of 5-methyluridine at position 54 (m5U54) in all tRNAs, and that of position 341 (m5U341) in tmRNA (transfer-mRNA). This Shewanella pealeana (strain ATCC 700345 / ANG-SQ1) protein is tRNA/tmRNA (uracil-C(5))-methyltransferase.